The primary structure comprises 658 residues: Carnitine O-palmitoyltransferase 2, mitochondrial (658 aa).

Residues 1–25 (MMPRLLLRDWPRCPSLVLGAPSRPL) constitute a mitochondrion transit peptide. At 26–178 (SAVSGPAEYL…GLLEPEVFHL (153 aa)) the chain is on the mitochondrial matrix side. Residue lysine 69 is modified to N6-succinyllysine. Residue lysine 79 is modified to N6-acetyllysine. Lysine 85 is subject to N6-succinyllysine. Residues 179 to 208 (NPARSDTDAFKRLIRFVPSSLSWYGAYLVN) constitute an intramembrane region (note=Mitochondrial inner membrane). The Mitochondrial matrix portion of the chain corresponds to 209–658 (AYPLDMSQYF…DALEGKAIKT (450 aa)). Lysine 239 carries the N6-acetyllysine; alternate modification. Lysine 239 carries the N6-succinyllysine; alternate modification. N6-acetyllysine is present on lysine 305. Catalysis depends on histidine 372, which acts as the Proton acceptor. The residue at position 418 (lysine 418) is an N6-acetyllysine; alternate. Lysine 418 is modified (N6-succinyllysine; alternate). N6-succinyllysine is present on residues lysine 424 and lysine 439. 452-464 (GKEFLKKKKLSPD) is a CoA binding site. (R)-carnitine-binding residues include tyrosine 486, serine 488, and threonine 499. N6-acetyllysine; alternate occurs at positions 510 and 544. Residues lysine 510 and lysine 544 each carry the N6-succinyllysine; alternate modification.

The protein belongs to the carnitine/choline acetyltransferase family.

The protein resides in the mitochondrion inner membrane. The enzyme catalyses (R)-carnitine + hexadecanoyl-CoA = O-hexadecanoyl-(R)-carnitine + CoA. It carries out the reaction octanoyl-CoA + (R)-carnitine = O-octanoyl-(R)-carnitine + CoA. The catalysed reaction is decanoyl-CoA + (R)-carnitine = O-decanoyl-(R)-carnitine + CoA. It catalyses the reaction dodecanoyl-CoA + (R)-carnitine = O-dodecanoyl-R-carnitine + CoA. The enzyme catalyses tetradecanoyl-CoA + (R)-carnitine = O-tetradecanoyl-(R)-carnitine + CoA. It carries out the reaction (R)-carnitine + octadecanoyl-CoA = O-octadecanoyl-(R)-carnitine + CoA. The catalysed reaction is eicosanoyl-CoA + (R)-carnitine = O-eicosanoyl-(R)-carnitine + CoA. It catalyses the reaction (9Z)-tetradecenoyl-CoA + (R)-carnitine = O-(9Z)-tetradecenoyl-(R)-carnitine + CoA. The enzyme catalyses (5Z)-tetradecenoyl-CoA + (R)-carnitine = O-(5Z)-tetradecenoyl-(R)-carnitine + CoA. It carries out the reaction (R)-carnitine + (9Z)-octadecenoyl-CoA = O-(9Z)-octadecenoyl-(R)-carnitine + CoA. The catalysed reaction is 4,8-dimethylnonanoyl-CoA + (R)-carnitine = O-4,8-dimethylnonanoyl-(R)-carnitine + CoA. Its pathway is lipid metabolism; fatty acid beta-oxidation. Functionally, involved in the intramitochondrial synthesis of acylcarnitines from accumulated acyl-CoA metabolites. Reconverts acylcarnitines back into the respective acyl-CoA esters that can then undergo beta-oxidation, an essential step for the mitochondrial uptake of long-chain fatty acids and their subsequent beta-oxidation in the mitochondrion. Active with medium (C8-C12) and long-chain (C14-C18) acyl-CoA esters. The chain is Carnitine O-palmitoyltransferase 2, mitochondrial from Mus musculus (Mouse).